We begin with the raw amino-acid sequence, 190 residues long: 3-isopropylmalate dehydratase small subunit (190 aa).

It belongs to the LeuD family. LeuD type 1 subfamily. Heterodimer of LeuC and LeuD.

The enzyme catalyses (2R,3S)-3-isopropylmalate = (2S)-2-isopropylmalate. It functions in the pathway amino-acid biosynthesis; L-leucine biosynthesis; L-leucine from 3-methyl-2-oxobutanoate: step 2/4. In terms of biological role, catalyzes the isomerization between 2-isopropylmalate and 3-isopropylmalate, via the formation of 2-isopropylmaleate. The sequence is that of 3-isopropylmalate dehydratase small subunit from Staphylococcus aureus (strain JH1).